The following is a 393-amino-acid chain: uncharacterized protein (393 aa).

The B box-type zinc finger occupies 6-47; it reads KYDNKCAIHKEHKIKMICATCKDVVCNECILLDHNGHKFGRI. Zn(2+) is bound by residues Cys11, His14, Cys34, and His39.

This is an uncharacterized protein from Dictyostelium discoideum (Social amoeba).